The chain runs to 150 residues: Ribonuclease H (150 aa).

The 142-residue stretch at 3-144 folds into the RNase H type-1 domain; the sequence is DKDMIEIWTD…ADGLARKGTD (142 aa). Mg(2+) is bound by residues Asp-12, Glu-50, Asp-72, and Asp-136. Residues 129-150 are disordered; the sequence is DEGNERADGLARKGTDEVRGRK.

This sequence belongs to the RNase H family. In terms of assembly, monomer. Mg(2+) serves as cofactor.

The protein localises to the cytoplasm. The catalysed reaction is Endonucleolytic cleavage to 5'-phosphomonoester.. Endonuclease that specifically degrades the RNA of RNA-DNA hybrids. This chain is Ribonuclease H, found in Hyphomonas neptunium (strain ATCC 15444).